Here is a 405-residue protein sequence, read N- to C-terminus: uncharacterized protein (405 aa).

Helical transmembrane passes span isoleucine 19–valine 39, valine 47–leucine 67, isoleucine 85–leucine 105, alanine 107–glycine 127, glycine 156–tryptophan 176, glycine 178–isoleucine 198, glycine 224–phenylalanine 244, glycine 252–proline 272, valine 283–methionine 303, isoleucine 309–alanine 329, threonine 344–methionine 364, and tryptophan 366–leucine 386.

The protein belongs to the major facilitator superfamily. YhhS family.

Its subcellular location is the cell inner membrane. This is an uncharacterized protein from Shigella flexneri.